A 395-amino-acid chain; its full sequence is Allantoicase (395 aa).

Belongs to the allantoicase family.

It catalyses the reaction allantoate + H2O = (S)-ureidoglycolate + urea. It participates in nitrogen metabolism; (S)-allantoin degradation; (S)-ureidoglycolate from allantoate (aminidohydrolase route): step 1/1. In terms of biological role, utilization of purines as secondary nitrogen sources, when primary sources are limiting. The chain is Allantoicase (allc) from Danio rerio (Zebrafish).